The sequence spans 40 residues: Beta-defensin 1 (40 aa).

Cystine bridges form between Cys7–Cys35, Cys14–Cys29, and Cys19–Cys36. Gly40 carries the post-translational modification Glycine amide.

Monomer. Homodimer.

Its subcellular location is the secreted. It localises to the membrane. Its function is as follows. Has antimicrobial activity against the Gram-positive bacteria methicillin-resistant S.aureus ATCC 33591 and L.monocytogenes EGD, the Gram-negative bacterium E.coli ML53p and the yeast C.albicans 820. Has no hemolytic activity towards human erythrocytes. The sequence is that of Beta-defensin 1 from Emys orbicularis (European pond turtle).